We begin with the raw amino-acid sequence, 149 residues long: Detocs response regulatory protein DtcB (149 aa).

Residues 1–134 (MILIVEDDAH…DIEACYYDHN (134 aa)) form the Response regulatory domain. Asp-53 bears the 4-aspartylphosphate mark.

Post-translationally, probably phosphorylated by DtcA.

Functionally, possible phosphate scavenger member of the two-component regulatory system Detocs that confers resistance to bacteriophage. When the system (DtcA-DtcB-DtcC) is expressed in a susceptible E.coli (strain MG1655) it confers resistance to bacteriophages T2, T4, T5, T6 and SECphi27. Detocs inhibits T5 infection leading to growth arrest but not complete cell lysis, during SECphi27 infection leads to cell lysis. Overexpression of this protein along with the intact Detocs locus cancels T5 immunity; when the phosphate-receiving Asp-53 is mutated to Ala in this protein, immunity is restored. DtcA probably autophosphorylates upon sensing viral infection, and subsequently transfers the phosphate signal to DtcC which activates it, leading to an antiviral defense; DtcB (this subunit) may scavenge phosphorylation signals from accidental activation of DtcA. In Vibrio alginolyticus, this protein is Detocs response regulatory protein DtcB.